The primary structure comprises 271 residues: Methyltransferase psoC (271 aa).

This sequence belongs to the methyltransferase superfamily. LaeA methyltransferase family.

It functions in the pathway secondary metabolite biosynthesis. Functionally, methyltransferase; part of the gene cluster that mediates the biosynthesis of pseurotin A, a competitive inhibitor of chitin synthase and an inducer of nerve-cell proliferation. The PKS-NRPS hybrid synthetase psoA is responsible for the biosynthesis of azaspirene, one of the first intermediates having the 1-oxa-7-azaspiro[4,4]-non-2-ene-4,6-dione core of pseurotin, via condensation of one acetyl-CoA, 4 malonyl-CoA, and a L-phenylalanine molecule. The dual-functional monooxygenase/methyltransferase psoF seems to be involved in the addition of the C3 methyl group onto the pseurotin scaffold. Azaspirene is then converted to synerazol through 4 steps including oxidation of C17 by the cytochrome P450 monooxygenase psoD, O-methylation of the hydroxy group of C8 by the methyltransferase psoC, and the trans-to-cis isomerization of the C13 olefin by the glutathione S-transferase psoE. The fourth step of synerazol production is performed by the dual-functional monooxygenase/methyltransferase psoF which seems to catalyze the epoxidation of the intermediate deepoxy-synerazol. Synerazol can be attacked by a water molecule nonenzymatically at two different positions to yield two diol products, pseurotin A and pseurotin D. The protein is Methyltransferase psoC of Aspergillus fumigatus (strain ATCC MYA-4609 / CBS 101355 / FGSC A1100 / Af293) (Neosartorya fumigata).